The chain runs to 468 residues: Heparan-sulfate 6-O-sulfotransferase 2 (468 aa).

Over 1–9 (MDGKSNYSR) the chain is Cytoplasmic. The chain crosses the membrane as a helical; Signal-anchor for type II membrane protein span at residues 10–30 (LLIALLMILFFGGIVLQYICS). Residues 31–468 (TSDWQLLHLA…DYLENVEQWR (438 aa)) lie on the Lumenal side of the membrane. An N-linked (GlcNAc...) asparagine glycan is attached at Asn79. 3'-phosphoadenylyl sulfate is bound at residue 103–111 (HIQKTGGTT). Substrate-binding positions include 133–134 (KK), Arg150, Trp155, and His160. His160 acts as the Proton acceptor in catalysis. 3'-phosphoadenylyl sulfate contacts are provided by Arg197 and Ser205. Residues His209 and Trp216 each coordinate substrate. Asn276 carries an N-linked (GlcNAc...) asparagine glycan. 329–331 (TQL) contributes to the 3'-phosphoadenylyl sulfate binding site. N-linked (GlcNAc...) asparagine glycosylation occurs at Asn332. 335–336 (RA) serves as a coordination point for 3'-phosphoadenylyl sulfate. The segment at 409–447 (FKPTKEPPMTEQSPAFAEEKQADAERTLESETEGQVEEN) is disordered. Basic and acidic residues predominate over residues 425–437 (AEEKQADAERTLE). The segment covering 438 to 447 (SETEGQVEEN) has biased composition (acidic residues).

It belongs to the sulfotransferase 6 family. In terms of tissue distribution, expressed ubiquitously during gastrulation. During early somitogenesis, strong expression in head and presumptive brain. During mid-somitogenesis, strong expression in eye, hindbrain and somitic boundaries and weak expression in tail bud. During late somitogenesis, strong expression in eye, hindbrain, branchial arch primordia, spinal cord and ventral medial somites. At 24 hours post-fertilization (hpf), strong expression throughout the head, with expression receeding from the trunk spinal cord, ventral medial somites and somitic boundaries; expressed in cells surrounding vascular structures of the dorsal aorta and caudal vein in the tail. At 36 hpf, expressed in lens, optic stalk, hindbrain and pectoral fin. At 48 hpf, expressed in eye, brain, otic vesicle and branchial arches.

Its subcellular location is the membrane. The catalysed reaction is alpha-D-glucosaminyl-[heparan sulfate](n) + 3'-phosphoadenylyl sulfate = 6-sulfo-alpha-D-glucosaminyl-[heparan sulfate](n) + adenosine 3',5'-bisphosphate + H(+). Its function is as follows. 6-O-sulfation enzyme which catalyzes the transfer of sulfate from 3'-phosphoadenosine 5'-phosphosulfate (PAPS) to position 6 of the N-sulfoglucosamine residue (GlcNS) of heparan sulfate. Required for muscle development and angiogenesis. The polypeptide is Heparan-sulfate 6-O-sulfotransferase 2 (hs6st2) (Danio rerio (Zebrafish)).